The following is a 375-amino-acid chain: MQCALYDAGRCRSCQWITQPIPEQLSAKTADLKNLLADFPVEEWCAPVSGPEQGFRNKAKMVVSGSVEKPLLGMLHRDGTPEDLCDCPLYPASFAPVFAALKPFIARAGLTPYNVARKRGELKYILLTESQSDGGMMLRFVLRSETKLAQLRKALPWLQEQLPQLKVITVNIQPVHMAIMEGETEIYLTEQQALADRFNDVPLWIRPQSFFQTNPAVASQLYATARDWVRQLPVNHMWDLFCGVGGFGLHCATPDMQLTGIEIAPEAIACAKQSAAELGLTRLQFQALDSTQFATAQGEVPELVLVNPPRRGIGKPLCDYLSTMAPRFIIYSSCNAQTMAKDIRELPGYRIERVQLFDMFPHTAHYEVLTLLVKM.

Positions 3, 11, 14, and 87 each coordinate [4Fe-4S] cluster. S-adenosyl-L-methionine is bound by residues Q212, F241, E262, and N307. Catalysis depends on C334, which acts as the Nucleophile.

Belongs to the class I-like SAM-binding methyltransferase superfamily. RNA M5U methyltransferase family. RlmC subfamily.

It catalyses the reaction uridine(747) in 23S rRNA + S-adenosyl-L-methionine = 5-methyluridine(747) in 23S rRNA + S-adenosyl-L-homocysteine + H(+). Functionally, catalyzes the formation of 5-methyl-uridine at position 747 (m5U747) in 23S rRNA. In Escherichia coli O17:K52:H18 (strain UMN026 / ExPEC), this protein is 23S rRNA (uracil(747)-C(5))-methyltransferase RlmC.